Here is a 260-residue protein sequence, read N- to C-terminus: Thiazole synthase (260 aa).

Catalysis depends on lysine 102, which acts as the Schiff-base intermediate with DXP. Residues glycine 163, 189 to 190, and 211 to 212 contribute to the 1-deoxy-D-xylulose 5-phosphate site; these read AG and NT.

This sequence belongs to the ThiG family. Homotetramer. Forms heterodimers with either ThiH or ThiS.

The protein localises to the cytoplasm. It carries out the reaction [ThiS sulfur-carrier protein]-C-terminal-Gly-aminoethanethioate + 2-iminoacetate + 1-deoxy-D-xylulose 5-phosphate = [ThiS sulfur-carrier protein]-C-terminal Gly-Gly + 2-[(2R,5Z)-2-carboxy-4-methylthiazol-5(2H)-ylidene]ethyl phosphate + 2 H2O + H(+). Its pathway is cofactor biosynthesis; thiamine diphosphate biosynthesis. Catalyzes the rearrangement of 1-deoxy-D-xylulose 5-phosphate (DXP) to produce the thiazole phosphate moiety of thiamine. Sulfur is provided by the thiocarboxylate moiety of the carrier protein ThiS. In vitro, sulfur can be provided by H(2)S. In Geobacter sp. (strain M21), this protein is Thiazole synthase.